Reading from the N-terminus, the 7570-residue chain is Dystonin (7570 aa).

Calponin-homology (CH) domains lie at 35 to 138 (KVQK…LHFQ) and 151 to 255 (MSAK…DAFP). The tract at residues 35–252 (KVQKKTFTKW…VITYVSSLYD (218 aa)) is actin-binding. Residues L135, K184, S236, and S237 each carry the phosphoserine modification. 2 Spectrin repeats span residues 602–699 (EINM…RHLD) and 701–802 (LHNF…QHIK). Residues 887–944 (KTSIPIKAICDYRQIEITIYKDDECVLANNSHRAKWKVISPTGNEAMVPSVCFTVPPP) enclose the SH3 domain. Spectrin repeat units lie at residues 1293–1422 (KYYR…KFAG) and 1440–1540 (KEHV…QESQ). Phosphoserine is present on S1382. The short motif at 1383–1389 (PVKRRRM) is the Nuclear localization signal; in isoform 6 element. E1565 is subject to Phosphoserine. Plectin repeat units follow at residues 1584–1626 (IRLL…QLKE), 1660–1703 (KVLE…LERQ), 1774–1817 (RLLS…LTYQ), 1818–1855 (VQTG…LEAQ), and 1856–1891 (RGYV…KILN). S2229 is subject to Phosphoserine. Disordered stretches follow at residues 2317-2346 (SNTS…IEEY), 2383-2441 (LLND…DETA), and 2585-2616 (DYIY…GKPR). Positions 2336–2345 (DKEDESEIEE) are enriched in acidic residues. Residues 2385 to 2394 (NDQQNNTGTD) show a composition bias toward low complexity. 3 stretches are compositionally biased toward acidic residues: residues 2395–2412 (TDSD…DDDH), 2430–2439 (YDTLQEENDE), and 2591–2605 (NDQD…DEEG). S2919 is modified (phosphoserine). A disordered region spans residues 3190 to 3221 (EASTVPSDSQMSDSSGVSPMTNSSELKPESRD). Low complexity predominate over residues 3192 to 3209 (STVPSDSQMSDSSGVSPM). 28 Spectrin repeats span residues 3395–3501 (LQHT…KQIM), 3643–3752 (QEYK…KELD), 3926–4040 (EKFD…NNLK), 4047–4153 (QHYE…EKLQ), 4160–4259 (LSVQ…ETLA), 4269–4368 (ELFE…EAVT), 4516–4621 (QKAQ…QKLE), 4628–4732 (TQFQ…DWID), 4742–4842 (QSLL…QHLQ), 4849–4951 (HQFQ…NKLK), 4958–5058 (LKYK…FCLE), 5068–5167 (QEVS…SFLE), 5174–5277 (GHFQ…EQVE), 5284–5388 (EEFY…AQLQ), 5395–5497 (GRFQ…RQLE), 5504–5715 (QQFH…KTLE), 5831–5933 (QQFD…LQLE), 5941–6041 (QFWE…VALD), 6048–6154 (TQFH…AKLL), 6161–6263 (EKFW…DKLE), 6270–6373 (VQYQ…HKLE), 6380–6482 (GQFQ…QQLD), 6489–6591 (KGFH…TKLE), 6598–6700 (MEFH…RSLD), 6707–6810 (KQFH…NKLE), 6817–6918 (GQFT…TRLE), 6925–7027 (EEFH…QRLA), and 7037–7167 (QELL…RKLN). S3968 is modified (phosphoserine). Position 4749 is a phosphoserine (S4749). K5470 is covalently cross-linked (Glycyl lysine isopeptide (Lys-Gly) (interchain with G-Cter in ubiquitin)). 2 EF-hand domains span residues 7197-7232 (HKKS…SKFP) and 7233-7268 (TSRL…NKDA). Ca(2+)-binding residues include D7210, D7212, D7214, K7216, E7221, D7246, D7248, D7250, Y7252, and E7257. The GAR domain occupies 7273-7351 (TDADKIEDEV…EFLVKNDPCR (79 aa)). Disordered stretches follow at residues 7358 to 7379 (KMLR…AKGR), 7395 to 7452 (SQGM…SKLR), and 7481 to 7570 (QFAD…SSKR). Positions 7362-7374 (SESNSSITTTQPT) are enriched in polar residues. Low complexity-rich tracts occupy residues 7411–7441 (SSRG…TTTP) and 7490–7504 (SRPG…GSRA). S7432 is subject to Phosphoserine. 3 positions are modified to phosphoserine: S7510, S7513, and S7525. A compositionally biased stretch (polar residues) spans 7519-7535 (EIQSVCSDVETVPQTHR). Residues 7550 to 7553 (SKIP) carry the Microtubule tip localization signal motif.

As to quaternary structure, homodimer. Isoform 1 interacts (via N-terminus) with PLEC (via N-terminus). Interacts with the neuronal intermediate filament protein, PRPH. Interacts with DES. Interacts with SYNE3. Isoform 1 and isoform 6 can homodimerize (via N-terminus). Isoform 1 interacts (via N-terminus) with ACTN2. Isoform 1 interacts (via N-terminus) with PLEC (via N-terminus). Isoform 3 interacts (via N-terminus) with COL17A1 (via cytoplasmic region). Isoform 3 interacts (via N-terminus) with ITGB4 isoform beta-4a (via cytoplasmic region). Isoform 3 interacts (via N-terminus) with ERBIN (via C-terminus). Isoform 3 associates (via C-terminal) with KRT5-KRT14 (via rod region) intermediate filaments of keratins. Interacts with MAPRE1; probably required for targeting to the growing microtubule plus ends. Interacts with TMIGD2. Isoform 9 interacts with TMEM108. Isoform 1 is expressed in myoblasts (at protein level). Isoform 3 is expressed in the skin. Isoform 6 is expressed in the brain. Highly expressed in skeletal muscle and cultured keratinocytes.

The protein resides in the cytoplasm. It is found in the cytoskeleton. Its subcellular location is the stress fiber. The protein localises to the cell projection. It localises to the axon. The protein resides in the myofibril. It is found in the sarcomere. Its subcellular location is the z line. The protein localises to the h zone. It localises to the cell junction. The protein resides in the hemidesmosome. It is found in the nucleus. Its subcellular location is the nucleus envelope. The protein localises to the membrane. It localises to the endoplasmic reticulum membrane. The protein resides in the cell cortex. It is found in the cell membrane. Cytoskeletal linker protein. Acts as an integrator of intermediate filaments, actin and microtubule cytoskeleton networks. Required for anchoring either intermediate filaments to the actin cytoskeleton in neural and muscle cells or keratin-containing intermediate filaments to hemidesmosomes in epithelial cells. The proteins may self-aggregate to form filaments or a two-dimensional mesh. Regulates the organization and stability of the microtubule network of sensory neurons to allow axonal transport. Mediates docking of the dynein/dynactin motor complex to vesicle cargos for retrograde axonal transport through its interaction with TMEM108 and DCTN1. Its function is as follows. Plays a structural role in the assembly of hemidesmosomes of epithelial cells; anchors keratin-containing intermediate filaments to the inner plaque of hemidesmosomes. Required for the regulation of keratinocyte polarity and motility; mediates integrin ITGB4 regulation of RAC1 activity. In terms of biological role, required for bundling actin filaments around the nucleus. Functionally, regulates the organization and stability of the microtubule network of sensory neurons to allow axonal transport. This chain is Dystonin, found in Homo sapiens (Human).